The primary structure comprises 160 residues: Large ribosomal subunit protein uL15 (160 aa).

Over residues 1–13 (MKLNEIRDNEGAR) the composition is skewed to basic and acidic residues. The disordered stretch occupies residues 1–41 (MKLNEIRDNEGARKSRIRVGRGIGSGKGKTGGRGVKGQKSR). Gly residues predominate over residues 21 to 35 (RGIGSGKGKTGGRGV).

It belongs to the universal ribosomal protein uL15 family. As to quaternary structure, part of the 50S ribosomal subunit.

Functionally, binds to the 23S rRNA. This Parvibaculum lavamentivorans (strain DS-1 / DSM 13023 / NCIMB 13966) protein is Large ribosomal subunit protein uL15.